A 631-amino-acid chain; its full sequence is Serine/threonine-protein kinase PLK3 (631 aa).

The segment at 1 to 59 (MEPAAGFLSPRPFPRAAVPSAPPAGPGPPANASPRSEPEVLAGPRAPDPPGRLITDPLS) is disordered. Residues 20 to 31 (SAPPAGPGPPAN) show a composition bias toward pro residues. One can recognise a Protein kinase domain in the interval 63 to 315 (YTKGRLLGKG…IEQILRHDFF (253 aa)). Residues 69 to 77 (LGKGGFARC) and Lys92 contribute to the ATP site. The Proton acceptor role is filled by Asp186. 2 POLO box domains span residues 448 to 526 (WVSK…YMEQ) and 547 to 630 (LLLQ…DQSP).

It belongs to the protein kinase superfamily. Ser/Thr protein kinase family. CDC5/Polo subfamily. Interacts (via the POLO-box domain) with CIB1; leading to inhibit PLK3 kinase activity. Interacts with GOLGB1. Post-translationally, phosphorylated in an ATM-dependent manner following DNA damage. Phosphorylated as cells enter mitosis and dephosphorylated as cells exit mitosis. As to expression, expressed in skin.

The protein localises to the cytoplasm. The protein resides in the nucleus. Its subcellular location is the nucleolus. It localises to the golgi apparatus. It is found in the cytoskeleton. The protein localises to the microtubule organizing center. The protein resides in the centrosome. It carries out the reaction L-seryl-[protein] + ATP = O-phospho-L-seryl-[protein] + ADP + H(+). It catalyses the reaction L-threonyl-[protein] + ATP = O-phospho-L-threonyl-[protein] + ADP + H(+). Serine/threonine-protein kinase involved in cell cycle regulation, response to stress and Golgi disassembly. Polo-like kinases act by binding and phosphorylating proteins that are already phosphorylated on a specific motif recognized by the POLO box domains. Phosphorylates ATF2, BCL2L1, CDC25A, CDC25C, CHEK2, HIF1A, JUN, p53/TP53, p73/TP73, PTEN, TOP2A and VRK1. Involved in cell cycle regulation: required for entry into S phase and cytokinesis. Phosphorylates BCL2L1, leading to regulate the G2 checkpoint and progression to cytokinesis during mitosis. Plays a key role in response to stress: rapidly activated upon stress stimulation, such as ionizing radiation, reactive oxygen species (ROS), hyperosmotic stress, UV irradiation and hypoxia. Involved in DNA damage response and G1/S transition checkpoint by phosphorylating CDC25A, p53/TP53 and p73/TP73. Phosphorylates p53/TP53 in response to reactive oxygen species (ROS), thereby promoting p53/TP53-mediated apoptosis. Phosphorylates CHEK2 in response to DNA damage, promoting the G2/M transition checkpoint. Phosphorylates the transcription factor p73/TP73 in response to DNA damage, leading to inhibit p73/TP73-mediated transcriptional activation and pro-apoptotic functions. Phosphorylates HIF1A and JUN is response to hypoxia. Phosphorylates ATF2 following hyperosmotic stress in corneal epithelium. Also involved in Golgi disassembly during the cell cycle: part of a MEK1/MAP2K1-dependent pathway that induces Golgi fragmentation during mitosis by mediating phosphorylation of VRK1. May participate in endomitotic cell cycle, a form of mitosis in which both karyokinesis and cytokinesis are interrupted and is a hallmark of megakaryocyte differentiation, via its interaction with CIB1. This chain is Serine/threonine-protein kinase PLK3 (Plk3), found in Mus musculus (Mouse).